The sequence spans 142 residues: Large ribosomal subunit protein uL11 (142 aa).

It belongs to the universal ribosomal protein uL11 family. In terms of assembly, part of the ribosomal stalk of the 50S ribosomal subunit. Interacts with L10 and the large rRNA to form the base of the stalk. L10 forms an elongated spine to which L12 dimers bind in a sequential fashion forming a multimeric L10(L12)X complex. One or more lysine residues are methylated.

Functionally, forms part of the ribosomal stalk which helps the ribosome interact with GTP-bound translation factors. The protein is Large ribosomal subunit protein uL11 of Rhodopseudomonas palustris (strain BisB18).